Reading from the N-terminus, the 782-residue chain is DnaJ homolog subfamily C member 16 (782 aa).

The N-terminal stretch at 1-25 (MEVRKLSISWQFLIVLVLILQILSA) is a signal peptide. Over 26 to 535 (LDFDPYRVLG…DSIFHNNWRE (510 aa)) the chain is Cytoplasmic. The J domain maps to 29–93 (DPYRVLGVSR…EKRSNYDQYG (65 aa)). Residues 119–247 (FYFDESFFHF…LRQFVESLLP (129 aa)) form the Thioredoxin domain. Residues 536-556 (MMPLLSLIFSALFILFGTVIV) form a helical; Anchor for type IV membrane protein membrane-spanning segment. Over 557 to 782 (QAFSDSNDER…FYIPSWPELD (226 aa)) the chain is Extracellular. Residues 562–593 (SNDERESSPPEKEEAQEKTGKTEPSFTKENSS) are disordered. Residues 563 to 582 (NDERESSPPEKEEAQEKTGK) are compositionally biased toward basic and acidic residues. A compositionally biased stretch (polar residues) spans 583–593 (TEPSFTKENSS). N631 carries an N-linked (GlcNAc...) asparagine glycan.

The protein resides in the endoplasmic reticulum membrane. Plays an important role in regulating the size of autophagosomes during the formation process. The protein is DnaJ homolog subfamily C member 16 (DNAJC16) of Homo sapiens (Human).